The following is a 379-amino-acid chain: Succinyl-diaminopimelate desuccinylase (379 aa).

Histidine 68 contacts Zn(2+). Aspartate 70 is an active-site residue. Aspartate 101 contributes to the Zn(2+) binding site. Glutamate 135 acts as the Proton acceptor in catalysis. The Zn(2+) site is built by glutamate 136, glutamate 164, and histidine 350.

This sequence belongs to the peptidase M20A family. DapE subfamily. In terms of assembly, homodimer. Requires Zn(2+) as cofactor. Co(2+) serves as cofactor.

The catalysed reaction is N-succinyl-(2S,6S)-2,6-diaminopimelate + H2O = (2S,6S)-2,6-diaminopimelate + succinate. Its pathway is amino-acid biosynthesis; L-lysine biosynthesis via DAP pathway; LL-2,6-diaminopimelate from (S)-tetrahydrodipicolinate (succinylase route): step 3/3. Catalyzes the hydrolysis of N-succinyl-L,L-diaminopimelic acid (SDAP), forming succinate and LL-2,6-diaminopimelate (DAP), an intermediate involved in the bacterial biosynthesis of lysine and meso-diaminopimelic acid, an essential component of bacterial cell walls. This is Succinyl-diaminopimelate desuccinylase from Bordetella pertussis (strain Tohama I / ATCC BAA-589 / NCTC 13251).